Consider the following 292-residue polypeptide: 4-hydroxy-tetrahydrodipicolinate synthase (292 aa).

Pyruvate is bound at residue T45. Y133 (proton donor/acceptor) is an active-site residue. The active-site Schiff-base intermediate with substrate is the K161. Position 203 (I203) interacts with pyruvate.

Belongs to the DapA family. Homotetramer; dimer of dimers.

Its subcellular location is the cytoplasm. The catalysed reaction is L-aspartate 4-semialdehyde + pyruvate = (2S,4S)-4-hydroxy-2,3,4,5-tetrahydrodipicolinate + H2O + H(+). The protein operates within amino-acid biosynthesis; L-lysine biosynthesis via DAP pathway; (S)-tetrahydrodipicolinate from L-aspartate: step 3/4. In terms of biological role, catalyzes the condensation of (S)-aspartate-beta-semialdehyde [(S)-ASA] and pyruvate to 4-hydroxy-tetrahydrodipicolinate (HTPA). This chain is 4-hydroxy-tetrahydrodipicolinate synthase, found in Erwinia tasmaniensis (strain DSM 17950 / CFBP 7177 / CIP 109463 / NCPPB 4357 / Et1/99).